The sequence spans 400 residues: S-adenosylmethionine sensor upstream of mTORC1 (400 aa).

Residues Arg-99, Gly-168, Asp-186, Asp-198, Phe-199, and Ser-240 each contribute to the S-adenosyl-L-methionine site.

The protein belongs to the BMT2/SAMTOR family. In terms of assembly, interacts with the GATOR1 complex; interaction is disrupted when samtor binds S-adenosyl-L-methionine. Interacts with the KICSTOR complex; interaction is disrupted when samtor binds S-adenosyl-L-methionine.

S-adenosyl-L-methionine-binding protein that acts as an inhibitor of mTORC1 signaling via interaction with the GATOR1 and KICSTOR complexes. Acts as a sensor of S-adenosyl-L-methionine to signal methionine sufficiency to mTORC1: in presence of methionine, binds S-adenosyl-L-methionine, leading to disrupt interaction with the GATOR1 and KICSTOR complexes and promote mTORC1 signaling. Upon methionine starvation, S-adenosyl-L-methionine levels are reduced, thereby promoting the association with GATOR1 and KICSTOR, leading to inhibit mTORC1 signaling. Probably also acts as a S-adenosyl-L-methionine-dependent methyltransferase. This Xenopus tropicalis (Western clawed frog) protein is S-adenosylmethionine sensor upstream of mTORC1.